The primary structure comprises 478 residues: Cysteine protease ATG4B (478 aa).

A compositionally biased stretch (polar residues) spans 1-15 (MTSLPDRGVSSSSSD). The tract at residues 1–20 (MTSLPDRGVSSSSSDPLCEG) is disordered. Catalysis depends on C164, which acts as the Nucleophile. Catalysis depends on residues D361 and H363.

This sequence belongs to the peptidase C54 family. In terms of assembly, interacts with ATG8. As to expression, constitutively expressed.

It is found in the cytoplasm. The catalysed reaction is [protein]-C-terminal L-amino acid-glycyl-phosphatidylethanolamide + H2O = [protein]-C-terminal L-amino acid-glycine + a 1,2-diacyl-sn-glycero-3-phosphoethanolamine. Cysteine protease that plays a key role in autophagy by mediating both proteolytic activation and delipidation of ATG8 family proteins. The protease activity is required for proteolytic activation of ATG8 family proteins: cleaves the C-terminal amino acid of ATG8 proteins to reveal a C-terminal glycine. Exposure of the glycine at the C-terminus is essential for ATG8 proteins conjugation to phosphatidylethanolamine (PE) and insertion to membranes, which is necessary for autophagy. In addition to the protease activity, also mediates delipidation of PE-conjugated ATG8 proteins. The polypeptide is Cysteine protease ATG4B (ATG4B) (Oryza sativa subsp. indica (Rice)).